The sequence spans 441 residues: Amino-acid acetyltransferase (441 aa).

The N-acetyltransferase domain occupies 295–434 (EQVRRATIND…QALYNYQRRS (140 aa)).

The protein belongs to the acetyltransferase family. ArgA subfamily. In terms of assembly, homohexamer.

Its subcellular location is the cytoplasm. It catalyses the reaction L-glutamate + acetyl-CoA = N-acetyl-L-glutamate + CoA + H(+). The protein operates within amino-acid biosynthesis; L-arginine biosynthesis; N(2)-acetyl-L-ornithine from L-glutamate: step 1/4. In Pectobacterium carotovorum subsp. carotovorum (strain PC1), this protein is Amino-acid acetyltransferase.